Reading from the N-terminus, the 210-residue chain is Thymidylate kinase (210 aa).

10 to 17 (GPEGAGKS) lines the ATP pocket.

This sequence belongs to the thymidylate kinase family.

It catalyses the reaction dTMP + ATP = dTDP + ADP. In terms of biological role, phosphorylation of dTMP to form dTDP in both de novo and salvage pathways of dTTP synthesis. The chain is Thymidylate kinase from Pseudomonas savastanoi pv. phaseolicola (strain 1448A / Race 6) (Pseudomonas syringae pv. phaseolicola (strain 1448A / Race 6)).